The following is a 366-amino-acid chain: Chorismate synthase (366 aa).

Residues arginine 48 and arginine 54 each coordinate NADP(+). Residues 125-127 (RSS), 238-239 (NA), glycine 278, 293-297 (KPTSS), and arginine 319 each bind FMN.

The protein belongs to the chorismate synthase family. Homotetramer. Requires FMNH2 as cofactor.

The catalysed reaction is 5-O-(1-carboxyvinyl)-3-phosphoshikimate = chorismate + phosphate. It functions in the pathway metabolic intermediate biosynthesis; chorismate biosynthesis; chorismate from D-erythrose 4-phosphate and phosphoenolpyruvate: step 7/7. Functionally, catalyzes the anti-1,4-elimination of the C-3 phosphate and the C-6 proR hydrogen from 5-enolpyruvylshikimate-3-phosphate (EPSP) to yield chorismate, which is the branch point compound that serves as the starting substrate for the three terminal pathways of aromatic amino acid biosynthesis. This reaction introduces a second double bond into the aromatic ring system. This Dechloromonas aromatica (strain RCB) protein is Chorismate synthase.